The primary structure comprises 321 residues: GDP-L-fucose synthase (321 aa).

Residue 14 to 20 (GGSGLVG) coordinates NADP(+). Y143 functions as the Proton donor/acceptor in the catalytic mechanism. Residues K147, 170–173 (PTNV), and H186 each bind NADP(+). K194, W208, R215, and D277 together coordinate substrate.

The protein belongs to the NAD(P)-dependent epimerase/dehydratase family. Fucose synthase subfamily. Homodimer.

It carries out the reaction GDP-beta-L-fucose + NADP(+) = GDP-4-dehydro-alpha-D-rhamnose + NADPH + H(+). It functions in the pathway nucleotide-sugar biosynthesis; GDP-L-fucose biosynthesis via de novo pathway; GDP-L-fucose from GDP-alpha-D-mannose: step 2/2. Catalyzes the two-step NADP-dependent conversion of GDP-4-dehydro-6-deoxy-D-mannose to GDP-fucose, involving an epimerase and a reductase reaction. The polypeptide is GDP-L-fucose synthase (GFUS) (Cricetulus griseus (Chinese hamster)).